The primary structure comprises 303 residues: N-acetylmuramic acid 6-phosphate etherase (303 aa).

The SIS domain occupies 61-224 (IVQAFQQGGR…TTASMILLGK (164 aa)). The active-site Proton donor is the glutamate 89. The active site involves glutamate 120.

It belongs to the GCKR-like family. MurNAc-6-P etherase subfamily. As to quaternary structure, homodimer.

The catalysed reaction is N-acetyl-D-muramate 6-phosphate + H2O = N-acetyl-D-glucosamine 6-phosphate + (R)-lactate. Its pathway is amino-sugar metabolism; 1,6-anhydro-N-acetylmuramate degradation. The protein operates within amino-sugar metabolism; N-acetylmuramate degradation. It functions in the pathway cell wall biogenesis; peptidoglycan recycling. Its function is as follows. Specifically catalyzes the cleavage of the D-lactyl ether substituent of MurNAc 6-phosphate, producing GlcNAc 6-phosphate and D-lactate. Together with AnmK, is also required for the utilization of anhydro-N-acetylmuramic acid (anhMurNAc) either imported from the medium or derived from its own cell wall murein, and thus plays a role in cell wall recycling. This chain is N-acetylmuramic acid 6-phosphate etherase (murQ), found in Haemophilus influenzae (strain ATCC 51907 / DSM 11121 / KW20 / Rd).